The primary structure comprises 588 residues: UDP-N-acetylmuramate--L-alanine ligase (588 aa).

An ATP-binding site is contributed by 119–125 (GSHGKST). A compositionally biased stretch (low complexity) spans 344–371 (VPAAAGAAAAPPVRRDPATAAAAATTAP). The interval 344–411 (VPAAAGAAAA…APAAGPDHAA (68 aa)) is disordered. The segment covering 372–381 (IGPPDSPPPT) has biased composition (pro residues). Positions 382–411 (GIALPRAAPPAVDAPVAATPAPAAGPDHAA) are enriched in low complexity.

The protein belongs to the MurCDEF family.

Its subcellular location is the cytoplasm. The enzyme catalyses UDP-N-acetyl-alpha-D-muramate + L-alanine + ATP = UDP-N-acetyl-alpha-D-muramoyl-L-alanine + ADP + phosphate + H(+). It participates in cell wall biogenesis; peptidoglycan biosynthesis. Cell wall formation. This is UDP-N-acetylmuramate--L-alanine ligase from Frankia alni (strain DSM 45986 / CECT 9034 / ACN14a).